A 204-amino-acid chain; its full sequence is Synaptosomal-associated protein 25-A (204 aa).

A compositionally biased stretch (basic and acidic residues) spans 1–11 (MAEDSDMRNEL). Residues 1-25 (MAEDSDMRNELADMQQRADQLADES) are disordered. 2 consecutive t-SNARE coiled-coil homology domains span residues 19-81 (DQLA…LNDL) and 138-200 (DARE…ATKM).

The protein belongs to the SNAP-25 family. As to expression, expressed in several regions throughout the adult brain, including the mesencephalon.

Its subcellular location is the synapse. The protein localises to the synaptosome. It localises to the cell membrane. Functionally, may play an important role in the synaptic function of specific neuronal systems. Associates with proteins involved in vesicle docking and membrane fusion. This chain is Synaptosomal-associated protein 25-A, found in Danio rerio (Zebrafish).